The following is a 158-amino-acid chain: Siroheme decarboxylase beta subunit (158 aa).

Belongs to the Ahb/Nir family. In terms of assembly, forms a heterodimer composed of AhbA and AhbB.

It carries out the reaction siroheme + 2 H(+) = 12,18-didecarboxysiroheme + 2 CO2. It participates in porphyrin-containing compound metabolism; protoheme biosynthesis. Involved in siroheme-dependent heme b biosynthesis. Catalyzes the decarboxylation of siroheme into didecarboxysiroheme. The chain is Siroheme decarboxylase beta subunit from Oleidesulfovibrio alaskensis (strain ATCC BAA-1058 / DSM 17464 / G20) (Desulfovibrio alaskensis).